The chain runs to 621 residues: Rab11 family-interacting protein 4A (621 aa).

EF-hand domains lie at 14–49 and 47–82; these read AFLK…FGQG and GQGD…IKGC. Residues Asp27, Asp29, Asp31, Tyr33, His38, Asp60, Asn62, Arg66, and Asp71 each contribute to the Ca(2+) site. Disordered regions lie at residues 132 to 172 and 203 to 243; these read YSDE…KEEG and DYGE…GQTP. Over residues 151–161 the composition is skewed to low complexity; sequence AADSGAGSESS. The span at 162–172 shows a compositional bias: basic and acidic residues; it reads EGGRQDDKEEG. The span at 225 to 243 shows a compositional bias: polar residues; sequence TNGFSDLGSSLPSSAGQTP. Positions 348–556 form a coiled coil; the sequence is DLKSKLKQEN…LNGQILSLSL (209 aa). The 63-residue stretch at 558 to 620 folds into the FIP-RBD domain; the sequence is EAKNLFACHT…DHNPSILEIK (63 aa).

In terms of assembly, homodimer. Forms a complex with Rab11 (rab11a or rab11b) and arf6. As to expression, isoform 1 is predominantly expressed in neural tissues. Isoform B is expressed ubiquitously. In the developing retina, it is expressed in progenitors throughout the retina at early stages and becomes restricted to the ganglion cell layer and ciliary marginal zone as differentiation proceeds.

Its subcellular location is the recycling endosome membrane. The protein resides in the cleavage furrow. It is found in the midbody. It localises to the cytoplasmic vesicle. Functionally, acts as a regulator of endocytic traffic by participating in membrane delivery. Required for the abscission step in cytokinesis, possibly by acting as an 'address tag' delivering recycling endosome membranes to the cleavage furrow during late cytokinesis. May play a role in differentiation during retinal development. This Danio rerio (Zebrafish) protein is Rab11 family-interacting protein 4A (rab11fip4a).